The primary structure comprises 350 residues: Heme A synthase (350 aa).

The next 8 helical transmembrane spans lie at 14 to 34 (VAIW…IGGF), 95 to 115 (YVHR…FIYF), 125 to 145 (VVIK…AGWY), 162 to 182 (LALH…QFFD), 202 to 222 (VGII…VAGL), 260 to 280 (VQFI…ILTV), 296 to 316 (IIQI…AIAI), and 317 to 337 (AHQV…CYLR). Heme is bound at residue histidine 264. Histidine 318 provides a ligand contact to heme.

This sequence belongs to the COX15/CtaA family. Type 2 subfamily. As to quaternary structure, interacts with CtaB. It depends on heme b as a cofactor.

It is found in the cell membrane. It carries out the reaction Fe(II)-heme o + 2 A + H2O = Fe(II)-heme a + 2 AH2. The protein operates within porphyrin-containing compound metabolism; heme A biosynthesis; heme A from heme O: step 1/1. Functionally, catalyzes the conversion of heme O to heme A by two successive hydroxylations of the methyl group at C8. The first hydroxylation forms heme I, the second hydroxylation results in an unstable dihydroxymethyl group, which spontaneously dehydrates, resulting in the formyl group of heme A. This Wolbachia pipientis wMel protein is Heme A synthase.